The chain runs to 141 residues: Nucleoside diphosphate kinase (141 aa).

Residues K11, F59, R87, T93, R104, and N114 each contribute to the ATP site. The active-site Pros-phosphohistidine intermediate is H117.

This sequence belongs to the NDK family. As to quaternary structure, homotetramer. Requires Mg(2+) as cofactor.

Its subcellular location is the cytoplasm. The catalysed reaction is a 2'-deoxyribonucleoside 5'-diphosphate + ATP = a 2'-deoxyribonucleoside 5'-triphosphate + ADP. It carries out the reaction a ribonucleoside 5'-diphosphate + ATP = a ribonucleoside 5'-triphosphate + ADP. In terms of biological role, major role in the synthesis of nucleoside triphosphates other than ATP. The ATP gamma phosphate is transferred to the NDP beta phosphate via a ping-pong mechanism, using a phosphorylated active-site intermediate. This Neisseria gonorrhoeae (strain NCCP11945) protein is Nucleoside diphosphate kinase.